The chain runs to 360 residues: NADH-quinone oxidoreductase subunit H (360 aa).

Transmembrane regions (helical) follow at residues 22–42 (ITVG…IPLI), 97–117 (ALFY…WAVI), 130–150 (IGLL…IIAG), 170–190 (ISYE…SGSM), 208–228 (VFSW…ISAV), 255–275 (GFAF…IAAL), 292–312 (WGFI…AVLY), and 336–356 (VLIP…ISPL).

It belongs to the complex I subunit 1 family. As to quaternary structure, NDH-1 is composed of 14 different subunits. Subunits NuoA, H, J, K, L, M, N constitute the membrane sector of the complex.

The protein resides in the cell inner membrane. It catalyses the reaction a quinone + NADH + 5 H(+)(in) = a quinol + NAD(+) + 4 H(+)(out). Its function is as follows. NDH-1 shuttles electrons from NADH, via FMN and iron-sulfur (Fe-S) centers, to quinones in the respiratory chain. The immediate electron acceptor for the enzyme in this species is believed to be ubiquinone. Couples the redox reaction to proton translocation (for every two electrons transferred, four hydrogen ions are translocated across the cytoplasmic membrane), and thus conserves the redox energy in a proton gradient. This subunit may bind ubiquinone. The polypeptide is NADH-quinone oxidoreductase subunit H (Neisseria meningitidis serogroup C / serotype 2a (strain ATCC 700532 / DSM 15464 / FAM18)).